Consider the following 620-residue polypeptide: Chaperone protein DnaK (620 aa).

Residue T197 is modified to Phosphothreonine; by autocatalysis. The segment at 591–620 (AQKLGEAMANKNNAEQPKKKDDDVIDAEVE) is disordered.

The protein belongs to the heat shock protein 70 family.

Functionally, acts as a chaperone. The polypeptide is Chaperone protein DnaK (Helicobacter pylori (strain HPAG1)).